The sequence spans 164 residues: Thiol peroxidase (164 aa).

Residues 18–163 enclose the Thioredoxin domain; it reads INEGDFAPDF…FDAALAAYKN (146 aa). Catalysis depends on cysteine 60, which acts as the Cysteine sulfenic acid (-SOH) intermediate. Cysteine 60 and cysteine 93 are oxidised to a cystine.

This sequence belongs to the peroxiredoxin family. Tpx subfamily. As to quaternary structure, homodimer.

The catalysed reaction is a hydroperoxide + [thioredoxin]-dithiol = an alcohol + [thioredoxin]-disulfide + H2O. Its function is as follows. Thiol-specific peroxidase that catalyzes the reduction of hydrogen peroxide and organic hydroperoxides to water and alcohols, respectively. Plays a role in cell protection against oxidative stress by detoxifying peroxides. This Staphylococcus aureus (strain COL) protein is Thiol peroxidase.